Reading from the N-terminus, the 901-residue chain is Protein translocase subunit SecA (901 aa).

ATP is bound by residues Gln87, 105–109 (GEGKT), and Asp512. Zn(2+) contacts are provided by Cys885, Cys887, Cys896, and His897.

The protein belongs to the SecA family. As to quaternary structure, monomer and homodimer. Part of the essential Sec protein translocation apparatus which comprises SecA, SecYEG and auxiliary proteins SecDF-YajC and YidC. It depends on Zn(2+) as a cofactor.

Its subcellular location is the cell inner membrane. It is found in the cytoplasm. It catalyses the reaction ATP + H2O + cellular proteinSide 1 = ADP + phosphate + cellular proteinSide 2.. Functionally, part of the Sec protein translocase complex. Interacts with the SecYEG preprotein conducting channel. Has a central role in coupling the hydrolysis of ATP to the transfer of proteins into and across the cell membrane, serving both as a receptor for the preprotein-SecB complex and as an ATP-driven molecular motor driving the stepwise translocation of polypeptide chains across the membrane. The polypeptide is Protein translocase subunit SecA (Salmonella paratyphi B (strain ATCC BAA-1250 / SPB7)).